We begin with the raw amino-acid sequence, 382 residues long: MPQRQPQPAHPVDGIYFGLMSGTSMDGVDGVAVRFEAGRAPVVLAEAFVGFAQSLRDALFALQQPGDNEIDRESLAANALVARYAVCCHELQRTAGLSRDEIRAIGVHGQTVRHRPERGYTRQLNNPALLAELTQVDVIADFRSRDVAAGGHGAPLAPAFHATVFGAPGETRVVCNLGGISNITILPGADGDVRGFDCGPANALIDAWATRHLGKPYDDGGKFAARGTVQASLLGALLDEPYFTAPPPKSTGRDLFNPAWLDARLAAFPQVAPEDVQATLTALTAVSVAREIAQHAPGCKAVFVCGGGARNPVLLDALRHALREAGVPATVDTTAALGVPPQQVEALAFAWLAYRFTARQPGNLATVTGAAGNRVLGALYPR.

Residue 22–29 (GTSMDGVD) coordinates ATP.

It belongs to the anhydro-N-acetylmuramic acid kinase family.

It catalyses the reaction 1,6-anhydro-N-acetyl-beta-muramate + ATP + H2O = N-acetyl-D-muramate 6-phosphate + ADP + H(+). It functions in the pathway amino-sugar metabolism; 1,6-anhydro-N-acetylmuramate degradation. The protein operates within cell wall biogenesis; peptidoglycan recycling. Its function is as follows. Catalyzes the specific phosphorylation of 1,6-anhydro-N-acetylmuramic acid (anhMurNAc) with the simultaneous cleavage of the 1,6-anhydro ring, generating MurNAc-6-P. Is required for the utilization of anhMurNAc either imported from the medium or derived from its own cell wall murein, and thus plays a role in cell wall recycling. In Burkholderia orbicola (strain AU 1054), this protein is Anhydro-N-acetylmuramic acid kinase.